The sequence spans 663 residues: Translation factor guf1, mitochondrial (663 aa).

The transit peptide at 1-51 (MRGCLQVLRWLSTSTARRPVSSRPLHEIFPKSEFRRPFTSTILRQAQASRN) directs the protein to the mitochondrion. Residues 65 to 245 (ERFRNFCIVA…TVIERIPAPV (181 aa)) form the tr-type G domain. Residues 74–81 (AHVDHGKS), 138–142 (DTPGH), and 192–195 (NKVD) each bind GTP.

It belongs to the TRAFAC class translation factor GTPase superfamily. Classic translation factor GTPase family. LepA subfamily.

Its subcellular location is the mitochondrion inner membrane. The catalysed reaction is GTP + H2O = GDP + phosphate + H(+). Promotes mitochondrial protein synthesis. May act as a fidelity factor of the translation reaction, by catalyzing a one-codon backward translocation of tRNAs on improperly translocated ribosomes. Binds to mitochondrial ribosomes in a GTP-dependent manner. This Talaromyces marneffei (strain ATCC 18224 / CBS 334.59 / QM 7333) (Penicillium marneffei) protein is Translation factor guf1, mitochondrial (guf1).